A 273-amino-acid chain; its full sequence is Undecaprenyl-diphosphatase (273 aa).

Transmembrane regions (helical) follow at residues 4-24, 48-68, 89-109, 116-136, 152-172, 193-213, 222-242, and 252-272; these read MELW…FAPV, AANT…VVVF, LNLI…VLFE, LFST…MIAA, ITYK…WPGF, ADFT…LSLL, ADIP…LLAI, and IRLV…YFLY.

Belongs to the UppP family.

Its subcellular location is the cell membrane. The catalysed reaction is di-trans,octa-cis-undecaprenyl diphosphate + H2O = di-trans,octa-cis-undecaprenyl phosphate + phosphate + H(+). Catalyzes the dephosphorylation of undecaprenyl diphosphate (UPP). Confers resistance to bacitracin. The chain is Undecaprenyl-diphosphatase from Geobacillus kaustophilus (strain HTA426).